The following is a 298-amino-acid chain: Lipoyl synthase (298 aa).

Positions 40, 45, 51, 67, 71, 74, and 280 each coordinate [4Fe-4S] cluster. The Radical SAM core domain maps to 53 to 269 (AVRRTATFMI…KEIALSKGFS (217 aa)).

Belongs to the radical SAM superfamily. Lipoyl synthase family. The cofactor is [4Fe-4S] cluster.

It localises to the cytoplasm. It carries out the reaction [[Fe-S] cluster scaffold protein carrying a second [4Fe-4S](2+) cluster] + N(6)-octanoyl-L-lysyl-[protein] + 2 oxidized [2Fe-2S]-[ferredoxin] + 2 S-adenosyl-L-methionine + 4 H(+) = [[Fe-S] cluster scaffold protein] + N(6)-[(R)-dihydrolipoyl]-L-lysyl-[protein] + 4 Fe(3+) + 2 hydrogen sulfide + 2 5'-deoxyadenosine + 2 L-methionine + 2 reduced [2Fe-2S]-[ferredoxin]. Its pathway is protein modification; protein lipoylation via endogenous pathway; protein N(6)-(lipoyl)lysine from octanoyl-[acyl-carrier-protein]. Its function is as follows. Catalyzes the radical-mediated insertion of two sulfur atoms into the C-6 and C-8 positions of the octanoyl moiety bound to the lipoyl domains of lipoate-dependent enzymes, thereby converting the octanoylated domains into lipoylated derivatives. The protein is Lipoyl synthase of Geobacillus kaustophilus (strain HTA426).